A 130-amino-acid chain; its full sequence is Small ribosomal subunit protein uS9 (130 aa).

It belongs to the universal ribosomal protein uS9 family.

This Geotalea uraniireducens (strain Rf4) (Geobacter uraniireducens) protein is Small ribosomal subunit protein uS9.